The following is a 120-amino-acid chain: U13-lycotoxin-Ls1d (120 aa).

The N-terminal stretch at 1 to 16 (MKILFVLISILYAVYC) is a signal peptide. Positions 17-54 (FSSEEDVDSAYLANELEPVEDINSEQYAALEPKEEQER) are excised as a propeptide. 4 cysteine pairs are disulfide-bonded: C56–C70, C63–C76, C69–C87, and C78–C85. The region spanning 56 to 95 (CADMGQDCKDDCDCCLNIATCNCRFGRYFCSCTFGDYQTC) is the Agouti domain.

The protein belongs to the neurotoxin 05 (agouti) family. Post-translationally, contains 6 disulfide bonds. As to expression, expressed by the venom gland.

The protein localises to the secreted. The polypeptide is U13-lycotoxin-Ls1d (Lycosa singoriensis (Wolf spider)).